The chain runs to 438 residues: Adenosylhomocysteinase (438 aa).

Residues Thr61, Asp137, and Glu162 each contribute to the substrate site. An NAD(+)-binding site is contributed by 163 to 165; that stretch reads TTT. Positions 192 and 196 each coordinate substrate. NAD(+) is bound by residues Asn197, 226 to 231, Glu249, Asn284, 305 to 307, and Asn352; these read GYGDVG and IGH.

It belongs to the adenosylhomocysteinase family. It depends on NAD(+) as a cofactor.

It localises to the cytoplasm. It catalyses the reaction S-adenosyl-L-homocysteine + H2O = L-homocysteine + adenosine. It functions in the pathway amino-acid biosynthesis; L-homocysteine biosynthesis; L-homocysteine from S-adenosyl-L-homocysteine: step 1/1. Its function is as follows. May play a key role in the regulation of the intracellular concentration of adenosylhomocysteine. In Christiangramia forsetii (strain DSM 17595 / CGMCC 1.15422 / KT0803) (Gramella forsetii), this protein is Adenosylhomocysteinase.